A 389-amino-acid chain; its full sequence is Alpha carbonic anhydrase 8 (389 aa).

Residues M1 to S22 form the signal peptide. The tract at residues S21 to W153 is disordered. Residues A25–A129 are compositionally biased toward pro residues. Residues T138 to K374 enclose the Alpha-carbonic anhydrase domain. C163 and C324 are disulfide-bonded. N196 is a glycosylation site (N-linked (GlcNAc...) asparagine). Catalysis depends on H204, which acts as the Proton acceptor. 3 residues coordinate Zn(2+): H232, H234, and H251. A substrate-binding site is contributed by T320 to A321. An N-linked (GlcNAc...) asparagine glycan is attached at N385.

It belongs to the alpha-class carbonic anhydrase family. The cofactor is Zn(2+). In terms of processing, N-glycosylated.

It localises to the plastid. The protein resides in the chloroplast stroma. The enzyme catalyses hydrogencarbonate + H(+) = CO2 + H2O. In terms of biological role, reversible hydration of carbon dioxide. The sequence is that of Alpha carbonic anhydrase 8 (ACA8) from Arabidopsis thaliana (Mouse-ear cress).